The chain runs to 215 residues: Ependymin-1 (215 aa).

The signal sequence occupies residues 1–20; that stretch reads MHTVKLLCVVFSCLCAVAWA. Residues Asn71 and Asn94 are each glycosylated (N-linked (GlcNAc...) asparagine).

Belongs to the ependymin family. As to quaternary structure, forms disulfide-linked dimers. Different glycosylation variants are known as EPD-beta and EPD-gamma. Post-translationally, binds calcium through the terminal sialic acids. EPDs are synthesized in the meninx and secreted in the cerebrospinal fluid.

Its subcellular location is the secreted. May play a role in neural plasticity. May be involved during axon regeneration. This chain is Ependymin-1 (epd1), found in Carassius auratus (Goldfish).